Consider the following 200-residue polypeptide: Elongation factor Ts (200 aa).

Residues 82–85 (TDFV) are involved in Mg(2+) ion dislocation from EF-Tu.

It belongs to the EF-Ts family.

The protein resides in the cytoplasm. In terms of biological role, associates with the EF-Tu.GDP complex and induces the exchange of GDP to GTP. It remains bound to the aminoacyl-tRNA.EF-Tu.GTP complex up to the GTP hydrolysis stage on the ribosome. The sequence is that of Elongation factor Ts from Solidesulfovibrio magneticus (strain ATCC 700980 / DSM 13731 / RS-1) (Desulfovibrio magneticus).